Consider the following 691-residue polypeptide: Protein vreteno (691 aa).

The tract at residues 128–155 is disordered; the sequence is QKEREITSDPVTSTEPMPTPGPAISATE. 2 consecutive Tudor domains span residues 366 to 427 and 573 to 630; these read KLQS…LAGL and APPI…FIFP.

Interacts with aub and piwi. In terms of tissue distribution, gonad-specific.

It localises to the cytoplasm. It is found in the cytoplasmic ribonucleoprotein granule. In terms of biological role, gonad-specific protein essential for germline development to repress transposable elements and preventing their mobilization, which is essential for the germline integrity. Acts via the piRNA metabolic process in both germline and somatic gonadal tissues by mediating the repression of transposable elements during meiosis. Required for primary piRNA biogenesis in both germline and somatic gonadal tissues. In Drosophila melanogaster (Fruit fly), this protein is Protein vreteno (vret).